We begin with the raw amino-acid sequence, 270 residues long: MPELPEVETTRQGIAPHCEGQTIQRVIVRNPSLRWPVPADLAEHLEGKTIRAVERRAKYLFLHLETGSVIVHLGMSGSLRVITDDSPAMTHDHVELVLGNHRRLRFNDPRRFGCWLWTTDWNRHPLISALGPEPLSEDFNGAWLFRLSRQKQTPVKSFIMDNHVVVGVGNIYANEALFKAGIHPKRKAGRISLDRYHKLAEAIRETLSAAILMGGTTLRDFVNSDGKPGYFAQSLLVYGKAGAPCTECNTPLKEIRMNNRSTVYCPRCQR.

P2 acts as the Schiff-base intermediate with DNA in catalysis. E3 functions as the Proton donor in the catalytic mechanism. The Proton donor; for beta-elimination activity role is filled by K58. DNA is bound by residues H91, R110, and K151. The FPG-type zinc-finger motif lies at 236 to 270; it reads LVYGKAGAPCTECNTPLKEIRMNNRSTVYCPRCQR. The active-site Proton donor; for delta-elimination activity is the R260.

This sequence belongs to the FPG family. In terms of assembly, monomer. It depends on Zn(2+) as a cofactor.

The enzyme catalyses Hydrolysis of DNA containing ring-opened 7-methylguanine residues, releasing 2,6-diamino-4-hydroxy-5-(N-methyl)formamidopyrimidine.. It catalyses the reaction 2'-deoxyribonucleotide-(2'-deoxyribose 5'-phosphate)-2'-deoxyribonucleotide-DNA = a 3'-end 2'-deoxyribonucleotide-(2,3-dehydro-2,3-deoxyribose 5'-phosphate)-DNA + a 5'-end 5'-phospho-2'-deoxyribonucleoside-DNA + H(+). In terms of biological role, involved in base excision repair of DNA damaged by oxidation or by mutagenic agents. Acts as a DNA glycosylase that recognizes and removes damaged bases. Has a preference for oxidized purines, such as 7,8-dihydro-8-oxoguanine (8-oxoG). Has AP (apurinic/apyrimidinic) lyase activity and introduces nicks in the DNA strand. Cleaves the DNA backbone by beta-delta elimination to generate a single-strand break at the site of the removed base with both 3'- and 5'-phosphates. The sequence is that of Formamidopyrimidine-DNA glycosylase from Marinobacter nauticus (strain ATCC 700491 / DSM 11845 / VT8) (Marinobacter aquaeolei).